The primary structure comprises 632 residues: tRNA uridine 5-carboxymethylaminomethyl modification enzyme MnmG (632 aa).

Residues 15-20 (GAGHAG), isoleucine 127, and serine 182 contribute to the FAD site. 276 to 290 (GPRYCPSIEDKIVRF) provides a ligand contact to NAD(+). Glutamine 373 contacts FAD.

Belongs to the MnmG family. In terms of assembly, homodimer. Heterotetramer of two MnmE and two MnmG subunits. The cofactor is FAD.

The protein localises to the cytoplasm. In terms of biological role, NAD-binding protein involved in the addition of a carboxymethylaminomethyl (cmnm) group at the wobble position (U34) of certain tRNAs, forming tRNA-cmnm(5)s(2)U34. The polypeptide is tRNA uridine 5-carboxymethylaminomethyl modification enzyme MnmG (Streptococcus pyogenes serotype M18 (strain MGAS8232)).